The following is a 422-amino-acid chain: Testin (422 aa).

The PET domain maps to 92–199 (MILTNPVPAK…GDVKLPGELE (108 aa)). Positions 198 to 224 (LETKATDKNNVNSGDRSTSAAVGAMED) are disordered. Positions 205–217 (KNNVNSGDRSTSA) are enriched in polar residues. 3 LIM zinc-binding domains span residues 234-297 (YSCY…CDSE), 299-359 (PRCA…KHAA), and 362-422 (QGCH…KMMS).

It belongs to the prickle / espinas / testin family.

It is found in the cytoplasm. The protein localises to the cell junction. It localises to the focal adhesion. Its function is as follows. Scaffold protein that may play a role in cell adhesion, cell spreading and in the reorganization of the actin cytoskeleton. May play a role in the regulation of cell proliferation. May inhibit cell growth. The protein is Testin (TES) of Gallus gallus (Chicken).